A 296-amino-acid polypeptide reads, in one-letter code: Solute carrier protein FPSE_08119 (296 aa).

3 helical membrane-spanning segments follow: residues G12 to A32, A122 to I142, and A219 to V239. Solcar repeat units lie at residues L16–E102, L114–Q205, and S213–S296.

The protein belongs to the mitochondrial carrier (TC 2.A.29) family.

Its subcellular location is the mitochondrion inner membrane. Solute carrier protein; part of the Fusarium detoxification of benzoxazolinone cluster involved in the degradation of benzoxazolinones produced by the host plant. Maize, wheat, and rye produce the 2 benzoxazinone phytoanticipins 2,4-dihy-droxy-7-methoxy-1,4-benzoxazin-3-one (DIMBOA) and 2,4-dihydroxy-1,4-benzoxazin-3-one (DIBOA) that, due to their inherent instability once released, spontaneously degrade to the more stable corresponding benzoxazolinones, 6-methoxy-2-benzoxazolinone (MBOA) and 2-benzoxazolinone (BOA), respectively. The sequence is that of Solute carrier protein FPSE_08119 from Fusarium pseudograminearum (strain CS3096) (Wheat and barley crown-rot fungus).